The chain runs to 176 residues: Large ribosomal subunit protein uL6 (176 aa).

Residues 151-170 (RPPEPYKGKGVRYADEQVRR) show a composition bias toward basic and acidic residues. A disordered region spans residues 151-176 (RPPEPYKGKGVRYADEQVRRKEAKKK).

It belongs to the universal ribosomal protein uL6 family. In terms of assembly, part of the 50S ribosomal subunit.

This protein binds to the 23S rRNA, and is important in its secondary structure. It is located near the subunit interface in the base of the L7/L12 stalk, and near the tRNA binding site of the peptidyltransferase center. This Shewanella piezotolerans (strain WP3 / JCM 13877) protein is Large ribosomal subunit protein uL6.